A 321-amino-acid polypeptide reads, in one-letter code: Probable 3-hydroxyisobutyrate dehydrogenase, mitochondrial (321 aa).

Residues 23-52 (KTVG…IVFD), 86-87 (LP), and Thr117 each bind NAD(+). The active site involves Lys192. Lys267 contacts NAD(+).

Belongs to the HIBADH-related family. 3-hydroxyisobutyrate dehydrogenase subfamily.

It localises to the mitochondrion. The catalysed reaction is 3-hydroxy-2-methylpropanoate + NAD(+) = 2-methyl-3-oxopropanoate + NADH + H(+). It functions in the pathway amino-acid degradation; L-valine degradation. This chain is Probable 3-hydroxyisobutyrate dehydrogenase, mitochondrial (hibA), found in Dictyostelium discoideum (Social amoeba).